The following is a 387-amino-acid chain: Phosphoglycerate kinase (387 aa).

Residues 21–23, arginine 36, 59–62, arginine 113, and arginine 146 contribute to the substrate site; these read DLN and HLGR. ATP is bound by residues lysine 197, glutamate 314, and 340 to 343; that span reads GGDT.

It belongs to the phosphoglycerate kinase family. In terms of assembly, monomer.

It is found in the cytoplasm. The enzyme catalyses (2R)-3-phosphoglycerate + ATP = (2R)-3-phospho-glyceroyl phosphate + ADP. The protein operates within carbohydrate degradation; glycolysis; pyruvate from D-glyceraldehyde 3-phosphate: step 2/5. This is Phosphoglycerate kinase from Aliivibrio salmonicida (strain LFI1238) (Vibrio salmonicida (strain LFI1238)).